Here is a 493-residue protein sequence, read N- to C-terminus: FAD-linked oxidoreductase tazL (493 aa).

Positions 1 to 17 (MRSNTVILAALPLVASA) are cleaved as a signal peptide. N-linked (GlcNAc...) asparagine glycans are attached at residues asparagine 29, asparagine 41, asparagine 53, asparagine 91, asparagine 253, asparagine 318, and asparagine 387. In terms of domain architecture, FAD-binding PCMH-type spans 63–235 (WAEPTFAVTI…TSATYEIFDA (173 aa)).

It belongs to the oxygen-dependent FAD-linked oxidoreductase family.

The protein operates within secondary metabolite biosynthesis. Its function is as follows. FAD-linked oxidoreductase; part of the gene cluster that mediates the biosynthesis of azaterrilone A and other azaphilones, a class of fungal metabolites characterized by a highly oxygenated pyrano-quinone bicyclic core and exhibiting a broad range of bioactivities. The first step of the pathway begins with the non-reducing polyketide synthase tazA that assembles one acetyl-CoA starter unit, five malonyl-CoA units, and catalyzes a series of Claisen condensations, methylation, PT-mediated cyclization, and finally releases the first hexaketide precursor through the R-domain. The tazA product then undergoes reduction on its terminal ketone and the following pyran-ring formation by yet undetermined enzyme(s). Dehydration and enoyl reduction, possibly involving the trans-enoyl reductase tazE leads to the next intermediate. TazD is predicted as an acetyltransferase and might catalyze the acetylation steps leading to the synthesis of azaterrilone A. Azaterrilone A is not the final product of the taz pathway and both the highly reducing polyketide synthase tazB and the dual enzyme tazHJ catalyze late steps of the pathway, leading to the production of the 2 final stereoisomers that contain additional polyketide modification whose structures have still to be determined. This chain is FAD-linked oxidoreductase tazL, found in Aspergillus terreus (strain NIH 2624 / FGSC A1156).